A 350-amino-acid chain; its full sequence is Uroporphyrinogen decarboxylase (350 aa).

Residues 27–31, Phe46, Asp76, Tyr152, Ser207, and His321 each bind substrate; that span reads RQAGR.

It belongs to the uroporphyrinogen decarboxylase family. Homodimer.

Its subcellular location is the cytoplasm. It carries out the reaction uroporphyrinogen III + 4 H(+) = coproporphyrinogen III + 4 CO2. Its pathway is porphyrin-containing compound metabolism; protoporphyrin-IX biosynthesis; coproporphyrinogen-III from 5-aminolevulinate: step 4/4. Functionally, catalyzes the decarboxylation of four acetate groups of uroporphyrinogen-III to yield coproporphyrinogen-III. The protein is Uroporphyrinogen decarboxylase of Listeria monocytogenes serotype 4a (strain HCC23).